A 186-amino-acid chain; its full sequence is Elongation factor P (186 aa).

Belongs to the elongation factor P family.

It is found in the cytoplasm. The protein operates within protein biosynthesis; polypeptide chain elongation. In terms of biological role, involved in peptide bond synthesis. Stimulates efficient translation and peptide-bond synthesis on native or reconstituted 70S ribosomes in vitro. Probably functions indirectly by altering the affinity of the ribosome for aminoacyl-tRNA, thus increasing their reactivity as acceptors for peptidyl transferase. The chain is Elongation factor P from Prochlorococcus marinus (strain SARG / CCMP1375 / SS120).